Reading from the N-terminus, the 178-residue chain is Bifunctional protein PyrR (178 aa).

The PRPP-binding motif lies at 99–111; it reads IIIIDDVLYTCRT.

This sequence belongs to the purine/pyrimidine phosphoribosyltransferase family. PyrR subfamily. In terms of assembly, homodimer and homohexamer; in equilibrium.

The catalysed reaction is UMP + diphosphate = 5-phospho-alpha-D-ribose 1-diphosphate + uracil. Regulates transcriptional attenuation of the pyrimidine nucleotide (pyr) operon by binding in a uridine-dependent manner to specific sites on pyr mRNA. This disrupts an antiterminator hairpin in the RNA and favors formation of a downstream transcription terminator, leading to a reduced expression of downstream genes. In terms of biological role, also displays a weak uracil phosphoribosyltransferase activity which is not physiologically significant. The chain is Bifunctional protein PyrR from Clostridium beijerinckii (strain ATCC 51743 / NCIMB 8052) (Clostridium acetobutylicum).